A 192-amino-acid chain; its full sequence is Protein GrpE (192 aa).

Residues 1–34 (MSSKEQKTPNEQVSEEMENAAEQQVEATQETGEG) are disordered. A compositionally biased stretch (polar residues) spans 21 to 31 (AEQQVEATQET).

Belongs to the GrpE family. As to quaternary structure, homodimer.

The protein localises to the cytoplasm. In terms of biological role, participates actively in the response to hyperosmotic and heat shock by preventing the aggregation of stress-denatured proteins, in association with DnaK and GrpE. It is the nucleotide exchange factor for DnaK and may function as a thermosensor. Unfolded proteins bind initially to DnaJ; upon interaction with the DnaJ-bound protein, DnaK hydrolyzes its bound ATP, resulting in the formation of a stable complex. GrpE releases ADP from DnaK; ATP binding to DnaK triggers the release of the substrate protein, thus completing the reaction cycle. Several rounds of ATP-dependent interactions between DnaJ, DnaK and GrpE are required for fully efficient folding. This Yersinia enterocolitica serotype O:8 / biotype 1B (strain NCTC 13174 / 8081) protein is Protein GrpE.